Consider the following 222-residue polypeptide: GTP cyclohydrolase 1 (222 aa).

The Zn(2+) site is built by Cys111, His114, and Cys182.

It belongs to the GTP cyclohydrolase I family. As to quaternary structure, toroid-shaped homodecamer, composed of two pentamers of five dimers.

It catalyses the reaction GTP + H2O = 7,8-dihydroneopterin 3'-triphosphate + formate + H(+). It functions in the pathway cofactor biosynthesis; 7,8-dihydroneopterin triphosphate biosynthesis; 7,8-dihydroneopterin triphosphate from GTP: step 1/1. The sequence is that of GTP cyclohydrolase 1 from Salmonella choleraesuis (strain SC-B67).